Reading from the N-terminus, the 212-residue chain is uncharacterized protein (212 aa).

S-adenosyl-L-methionine is bound by residues G53, E74, and D96.

It belongs to the methyltransferase superfamily. YrrT family.

Functionally, could be a S-adenosyl-L-methionine-dependent methyltransferase. This is an uncharacterized protein from Anoxybacillus flavithermus (strain DSM 21510 / WK1).